A 444-amino-acid polypeptide reads, in one-letter code: Protein CPn_0808/CP_1063/CPj0808/CpB0837 (444 aa).

The span at 1 to 13 (MTSGVSGSSSQDP) shows a compositional bias: polar residues. The interval 1-124 (MTSGVSGSSS…NNYDSPSLPT (124 aa)) is disordered. Low complexity predominate over residues 15–24 (LAAQLAQSSQ). Over residues 25-42 (KAGNAQSGHDTKNVTKQG) the composition is skewed to polar residues. Basic and acidic residues predominate over residues 77 to 86 (SKGEKSEKSG). Over residues 88–103 (SKSSTSVASASETATA) the composition is skewed to low complexity. The segment covering 113 to 124 (RQNNYDSPSLPT) has biased composition (polar residues).

It belongs to the chlamydial CPn_0808/CT_579/TC_0868 family.

The polypeptide is Protein CPn_0808/CP_1063/CPj0808/CpB0837 (Chlamydia pneumoniae (Chlamydophila pneumoniae)).